The primary structure comprises 782 residues: LPS-assembly protein LptD (782 aa).

The N-terminal stretch at 1–24 (MKKNSYTRLSIAILSTLYSVSSLA) is a signal peptide.

The protein belongs to the LptD family. Component of the lipopolysaccharide transport and assembly complex. Interacts with LptE and LptA.

The protein resides in the cell outer membrane. Together with LptE, is involved in the assembly of lipopolysaccharide (LPS) at the surface of the outer membrane. The polypeptide is LPS-assembly protein LptD (Pasteurella multocida (strain Pm70)).